A 331-amino-acid chain; its full sequence is Ferredoxin--NADP reductase (331 aa).

FAD is bound by residues Glu-34, Gln-42, Tyr-47, Val-87, Phe-120, Asp-285, and Thr-325.

This sequence belongs to the ferredoxin--NADP reductase type 2 family. As to quaternary structure, homodimer. It depends on FAD as a cofactor.

The catalysed reaction is 2 reduced [2Fe-2S]-[ferredoxin] + NADP(+) + H(+) = 2 oxidized [2Fe-2S]-[ferredoxin] + NADPH. The chain is Ferredoxin--NADP reductase from Levilactobacillus brevis (strain ATCC 367 / BCRC 12310 / CIP 105137 / JCM 1170 / LMG 11437 / NCIMB 947 / NCTC 947) (Lactobacillus brevis).